The following is a 181-amino-acid chain: Ribonuclease HII (181 aa).

The RNase H type-2 domain occupies 1–181 (MICGIDEVGR…SLHRRNFKLI (181 aa)). Residues aspartate 6, glutamate 7, and aspartate 98 each coordinate a divalent metal cation.

It belongs to the RNase HII family. Requires Mn(2+) as cofactor. Mg(2+) is required as a cofactor.

Its subcellular location is the cytoplasm. It carries out the reaction Endonucleolytic cleavage to 5'-phosphomonoester.. Endonuclease that specifically degrades the RNA of RNA-DNA hybrids. In Borrelia garinii subsp. bavariensis (strain ATCC BAA-2496 / DSM 23469 / PBi) (Borreliella bavariensis), this protein is Ribonuclease HII.